The following is a 138-amino-acid chain: Transmembrane protein 170A (138 aa).

Topologically, residues 1–44 are lumenal; the sequence is MEGSEAGGGGLLQQILSLRLVPRVGNGTTYSSPLSTFPEMWYGV. An N-linked (GlcNAc...) asparagine glycan is attached at Asn26. A helical transmembrane segment spans residues 45–65; that stretch reads FLWALVSSLSFHVPAALLALF. Residues 66-79 lie on the Cytoplasmic side of the membrane; it reads TLRHHKYGRFMSVS. A helical transmembrane segment spans residues 80–100; the sequence is LLLMGIVGPITAGILTSAAIA. Topologically, residues 101–110 are lumenal; it reads GVYRAAGKKM. A helical membrane pass occupies residues 111–131; sequence IPFEALIFEVGQTFCVVVVSF. The Cytoplasmic portion of the chain corresponds to 132 to 138; sequence LRILATL.

Belongs to the TMEM170 family.

It is found in the endoplasmic reticulum membrane. The protein resides in the nucleus envelope. Its function is as follows. May regulate membrane morphogenesis in the endoplasmic reticulum (ER) by promoting ER sheet formation at the expense of ER tubules. The protein is Transmembrane protein 170A (TMEM170A) of Gallus gallus (Chicken).